Reading from the N-terminus, the 869-residue chain is Kinesin-like protein KIN-10A (869 aa).

The segment covering 1 to 36 (MAPTPSSSRSNQTQYTLIRTPQTKQRLNFHSKTPNP) has biased composition (polar residues). Residues 1-50 (MAPTPSSSRSNQTQYTLIRTPQTKQRLNFHSKTPNPDGSKDPSPPEHPVE) form a disordered region. Basic and acidic residues predominate over residues 38–50 (GSKDPSPPEHPVE). In terms of domain architecture, Kinesin motor spans 48–367 (PVEVIGRIRD…LEYGAKAKCI (320 aa)). An ATP-binding site is contributed by 129–136 (GPTGAGKS). Residues 393–515 (RIAAMDEFII…EIEVEFRRSN (123 aa)) adopt a coiled-coil conformation.

It belongs to the TRAFAC class myosin-kinesin ATPase superfamily. Kinesin family. KIN-10 subfamily. As to quaternary structure, binds microtubules.

It localises to the cytoplasm. Its subcellular location is the cytoskeleton. The protein localises to the phragmoplast. In terms of biological role, probable plus end-directed motor protein that may contribute to the transport of Golgi-derived vesicles in the phragmoplast. In Arabidopsis thaliana (Mouse-ear cress), this protein is Kinesin-like protein KIN-10A.